The following is a 105-amino-acid chain: uncharacterized protein (105 aa).

A run of 2 helical transmembrane segments spans residues 26 to 46 (NVLI…CIAI) and 66 to 86 (SALA…TLAI).

It localises to the cell membrane. This is an uncharacterized protein from Mycoplasma pneumoniae (strain ATCC 29342 / M129 / Subtype 1) (Mycoplasmoides pneumoniae).